The sequence spans 953 residues: UvrABC system protein A (953 aa).

ATP is bound at residue 33–40 (GLSGSGKS). 2 consecutive ABC transporter domains span residues 320–599 (WGST…EESI) and 619–949 (GHDN…RYLK). 652-659 (GVSGSGKS) is an ATP binding site. The C4-type zinc finger occupies 752 to 778 (CEACQGDGLIKIEMHFLPDVYVKCDIC).

The protein belongs to the ABC transporter superfamily. UvrA family. As to quaternary structure, forms a heterotetramer with UvrB during the search for lesions.

It is found in the cytoplasm. The UvrABC repair system catalyzes the recognition and processing of DNA lesions. UvrA is an ATPase and a DNA-binding protein. A damage recognition complex composed of 2 UvrA and 2 UvrB subunits scans DNA for abnormalities. When the presence of a lesion has been verified by UvrB, the UvrA molecules dissociate. This Rickettsia prowazekii (strain Madrid E) protein is UvrABC system protein A.